A 285-amino-acid polypeptide reads, in one-letter code: Foldase protein PrsA 2 (285 aa).

The first 20 residues, 1-20 (MRGKHIFIITALISILMLSA), serve as a signal peptide directing secretion. Cys21 is lipidated: N-palmitoyl cysteine. Cys21 carries the S-diacylglycerol cysteine lipid modification. In terms of domain architecture, PpiC spans 134–224 (KPEIKASHIL…NGYHVIKLTD (91 aa)).

Belongs to the PrsA family.

The protein localises to the cell membrane. It carries out the reaction [protein]-peptidylproline (omega=180) = [protein]-peptidylproline (omega=0). In terms of biological role, plays a major role in protein secretion by helping the post-translocational extracellular folding of several secreted proteins. The polypeptide is Foldase protein PrsA 2 (prsA2) (Bacillus cereus (strain ATCC 14579 / DSM 31 / CCUG 7414 / JCM 2152 / NBRC 15305 / NCIMB 9373 / NCTC 2599 / NRRL B-3711)).